We begin with the raw amino-acid sequence, 259 residues long: Large ribosomal subunit protein uL2m (259 aa).

The disordered stretch occupies residues 234-259 (VAMNPVDHPNGGRTKTPKPERSPGVE). The segment covering 250–259 (PKPERSPGVE) has biased composition (basic and acidic residues).

Belongs to the universal ribosomal protein uL2 family.

The protein localises to the mitochondrion. This Paramecium tetraurelia protein is Large ribosomal subunit protein uL2m (RPL2).